The sequence spans 64 residues: Large ribosomal subunit protein bL35 (64 aa).

Residues 27 to 47 (MNGSHNLEKKNRKRSRRLHQA) are disordered. The span at 36–45 (KNRKRSRRLH) shows a compositional bias: basic residues.

It belongs to the bacterial ribosomal protein bL35 family.

This is Large ribosomal subunit protein bL35 from Chlorobium phaeobacteroides (strain DSM 266 / SMG 266 / 2430).